The following is a 333-amino-acid chain: Holliday junction branch migration complex subunit RuvB (333 aa).

The interval 1–182 (MDERLLSGES…FGVLSRLEYY (182 aa)) is large ATPase domain (RuvB-L). ATP contacts are provided by residues Leu21, Arg22, Gly63, Lys66, Thr67, Thr68, 129 to 131 (EDF), Arg172, Tyr182, and Arg219. Thr67 lines the Mg(2+) pocket. Residues 183 to 253 (TVDQLSAIVE…ITQMALELLQ (71 aa)) form a small ATPAse domain (RuvB-S) region. The head domain (RuvB-H) stretch occupies residues 256–333 (KLGLDHIDHK…EHFGMEMPKV (78 aa)). DNA contacts are provided by Arg311 and Arg316.

This sequence belongs to the RuvB family. Homohexamer. Forms an RuvA(8)-RuvB(12)-Holliday junction (HJ) complex. HJ DNA is sandwiched between 2 RuvA tetramers; dsDNA enters through RuvA and exits via RuvB. An RuvB hexamer assembles on each DNA strand where it exits the tetramer. Each RuvB hexamer is contacted by two RuvA subunits (via domain III) on 2 adjacent RuvB subunits; this complex drives branch migration. In the full resolvosome a probable DNA-RuvA(4)-RuvB(12)-RuvC(2) complex forms which resolves the HJ.

Its subcellular location is the cytoplasm. The enzyme catalyses ATP + H2O = ADP + phosphate + H(+). In terms of biological role, the RuvA-RuvB-RuvC complex processes Holliday junction (HJ) DNA during genetic recombination and DNA repair, while the RuvA-RuvB complex plays an important role in the rescue of blocked DNA replication forks via replication fork reversal (RFR). RuvA specifically binds to HJ cruciform DNA, conferring on it an open structure. The RuvB hexamer acts as an ATP-dependent pump, pulling dsDNA into and through the RuvAB complex. RuvB forms 2 homohexamers on either side of HJ DNA bound by 1 or 2 RuvA tetramers; 4 subunits per hexamer contact DNA at a time. Coordinated motions by a converter formed by DNA-disengaged RuvB subunits stimulates ATP hydrolysis and nucleotide exchange. Immobilization of the converter enables RuvB to convert the ATP-contained energy into a lever motion, pulling 2 nucleotides of DNA out of the RuvA tetramer per ATP hydrolyzed, thus driving DNA branch migration. The RuvB motors rotate together with the DNA substrate, which together with the progressing nucleotide cycle form the mechanistic basis for DNA recombination by continuous HJ branch migration. Branch migration allows RuvC to scan DNA until it finds its consensus sequence, where it cleaves and resolves cruciform DNA. The protein is Holliday junction branch migration complex subunit RuvB of Bacillus mycoides (strain KBAB4) (Bacillus weihenstephanensis).